We begin with the raw amino-acid sequence, 699 residues long: Polyribonucleotide nucleotidyltransferase (699 aa).

Mg(2+)-binding residues include aspartate 485 and aspartate 491. Positions 552 to 611 (PRITTIKINPEKIRDVIGKGGAVIRALTEETGTTIELEDDGTVKIASNNGDATREAIRRI) constitute a KH domain. Residues 621 to 689 (GRLYTGKVIR…RQGRVRLSIK (69 aa)) form the S1 motif domain.

Belongs to the polyribonucleotide nucleotidyltransferase family. In terms of assembly, component of the RNA degradosome, which is a multiprotein complex involved in RNA processing and mRNA degradation. It depends on Mg(2+) as a cofactor.

The protein localises to the cytoplasm. It carries out the reaction RNA(n+1) + phosphate = RNA(n) + a ribonucleoside 5'-diphosphate. In terms of biological role, involved in mRNA degradation. Catalyzes the phosphorolysis of single-stranded polyribonucleotides processively in the 3'- to 5'-direction. The polypeptide is Polyribonucleotide nucleotidyltransferase (Shewanella amazonensis (strain ATCC BAA-1098 / SB2B)).